The chain runs to 433 residues: Mitochondrial distribution and morphology protein 12 (433 aa).

The SMP-LTD domain occupies 1–433 (MSIDIDWERA…VYPSFWTFLI (433 aa)). 3 disordered regions span residues 62–113 (LSDP…GGQM), 180–279 (TPLG…RMRE), and 356–376 (GPET…SPRR). Over residues 81–96 (SEERSPTREPVDRYGN) the composition is skewed to basic and acidic residues. The span at 214–236 (SAQSRPSTANTGNTLPSRDSMSV) shows a compositional bias: polar residues. The span at 268 to 279 (PLDDTPPRRMRE) shows a compositional bias: basic and acidic residues.

Belongs to the MDM12 family. Component of the ER-mitochondria encounter structure (ERMES) or MDM complex, composed of MMM1, MDM10, MDM12 and MDM34. An MMM1 homodimer associates with one molecule of MDM12 on each side in a pairwise head-to-tail manner, and the SMP-LTD domains of MMM1 and MDM12 generate a continuous hydrophobic tunnel for phospholipid trafficking.

It is found in the mitochondrion outer membrane. The protein localises to the endoplasmic reticulum membrane. In terms of biological role, component of the ERMES/MDM complex, which serves as a molecular tether to connect the endoplasmic reticulum (ER) and mitochondria. Components of this complex are involved in the control of mitochondrial shape and protein biogenesis, and function in nonvesicular lipid trafficking between the ER and mitochondria. MDM12 is required for the interaction of the ER-resident membrane protein MMM1 and the outer mitochondrial membrane-resident beta-barrel protein MDM10. The MDM12-MMM1 subcomplex functions in the major beta-barrel assembly pathway that is responsible for biogenesis of all mitochondrial outer membrane beta-barrel proteins, and acts in a late step after the SAM complex. The MDM10-MDM12-MMM1 subcomplex further acts in the TOM40-specific pathway after the action of the MDM12-MMM1 complex. Essential for establishing and maintaining the structure of mitochondria and maintenance of mtDNA nucleoids. The sequence is that of Mitochondrial distribution and morphology protein 12 from Ajellomyces capsulatus (strain NAm1 / WU24) (Darling's disease fungus).